Here is a 321-residue protein sequence, read N- to C-terminus: Cytochrome c biogenesis protein CcsA (321 aa).

7 helical membrane passes run 9 to 29 (ILTHISFSTISIVITIHLITL), 44 to 64 (GMIATFFSITGFLVSRWVSSG), 68 to 88 (LSNLYESLIFLSWTLYILHTI), 143 to 163 (MLLSYATLLCGSLLSAALLII), 225 to 245 (VISLGFTLLTVGILCGAVWAN), 259 to 273 (TWAFITWTIFAIYLH), and 288 to 308 (VASIGFLIIWICYFGINLLGI).

The protein belongs to the CcmF/CycK/Ccl1/NrfE/CcsA family. May interact with Ccs1.

It localises to the plastid. It is found in the chloroplast thylakoid membrane. In terms of biological role, required during biogenesis of c-type cytochromes (cytochrome c6 and cytochrome f) at the step of heme attachment. This chain is Cytochrome c biogenesis protein CcsA, found in Zea mays (Maize).